The primary structure comprises 240 residues: Glutathione S-transferase omega-1 (240 aa).

N-acetylserine is present on serine 2. The GST N-terminal domain occupies 22-101 (GQIRVYSMRF…YLDEAYPEKK (80 aa)). Cysteine 32 (nucleophile) is an active-site residue. Position 57 is an N6-acetyllysine (lysine 57). Residues lysine 59, valine 72, and 85–86 (ES) each bind glutathione. The GST C-terminal domain occupies 106-227 (DPYKKARQKM…AKTYREYLNL (122 aa)). Serine 129 is modified (phosphoserine). Lysine 152 carries the N6-acetyllysine modification.

This sequence belongs to the GST superfamily. Omega family. Homodimer.

It localises to the cytoplasm. The protein resides in the cytosol. It catalyses the reaction RX + glutathione = an S-substituted glutathione + a halide anion + H(+). The catalysed reaction is L-dehydroascorbate + 2 glutathione = glutathione disulfide + L-ascorbate. It carries out the reaction methylarsonate + 2 glutathione + H(+) = methylarsonous acid + glutathione disulfide + H2O. In terms of biological role, exhibits glutathione-dependent thiol transferase and dehydroascorbate reductase activities. Has S-(phenacyl)glutathione reductase activity. Also has glutathione S-transferase activity. Participates in the biotransformation of inorganic arsenic and reduces monomethylarsonic acid (MMA) and dimethylarsonic acid. This Mus musculus (Mouse) protein is Glutathione S-transferase omega-1 (Gsto1).